The following is a 661-amino-acid chain: ATP-dependent RNA helicase vasa (661 aa).

Acidic residues predominate over residues 1–10 (MSDDWDDEPI). A disordered region spans residues 1–186 (MSDDWDDEPI…RRRRNEDDIN (186 aa)). A Phosphoserine modification is found at serine 22. Residue threonine 27 is modified to Phosphothreonine. Gly residues-rich tracts occupy residues 38–52 (DGVG…GYQG) and 60–83 (RIGG…GGFH). The segment covering 85–95 (GRREGERDFRG) has biased composition (basic and acidic residues). Repeat copies occupy residues 93–99 (FRGGEGG), 100–106 (FRGGQGG), 107–113 (SRGGQGG), 114–120 (SRGGQGG), and 121–127 (FRGGEGG). Residues 93 to 127 (FRGGEGGFRGGQGGSRGGQGGSRGGQGGFRGGEGG) are 5 X 7 AA tandem repeats of [FS]-R-G-G-[EQ]-G-G. Gly residues predominate over residues 96-129 (GEGGFRGGQGGSRGGQGGSRGGQGGFRGGEGGFR). Positions 131-172 (RLYENEDGDERRGRLDREERGGERRGRLDREERGGERGERGD) are enriched in basic and acidic residues. A B30.2/SPRY domain-binding motif motif is present at residues 184-188 (DINNN). Residues 184-203 (DINNNNNIVEDVERKREFYI) form a required for posterior localization in oocyte region. The Q motif motif lies at 245–273 (QHFTSADLRDIIIDNVNKSGYKIPTPIQK). The 178-residue stretch at 276–453 (IPVISSGRDL…GEFLKNYVFV (178 aa)) folds into the Helicase ATP-binding domain. Residue 289-296 (AQTGSGKT) coordinates ATP. Positions 399–402 (DEAD) match the DEAD box motif. Residues 477–624 (KRSKLIEILS…TVPDFLRTCG (148 aa)) enclose the Helicase C-terminal domain.

It belongs to the DEAD box helicase family. DDX4/VASA subfamily. In terms of assembly, interacts with eIF5B and faf. Interacts with gus (via B30.2/SPRY domain) and Fsn (via B30.2/SPRY domain). Interacts with aub, me31B, eIF-4a and TER94. Interacts with piwi; this interaction is RNA independent. Interacts with Dcr-1 and Fmr1; these interactions occur in the polar granules. The cofactor is Mg(2+). In terms of processing, ubiquitinated during oogenesis. Deubiquitinated by faf, which protects this protein from proteasome-mediated degradation. As to expression, abundantly expressed in the female germline. Gus and faf are required for vas expression in the posterior pole of the oocyte.

It is found in the cytoplasm. It localises to the perinuclear region. The protein localises to the cytoplasmic ribonucleoprotein granule. It carries out the reaction ATP + H2O = ADP + phosphate + H(+). In terms of biological role, involved in translational control mechanisms operating in early stages of oogenesis. Required maternally in many stages of oogenesis, including cystocyte differentiation, oocyte differentiation, and specification of anterior-posterior polarity in the developing cysts. Essential for the formation and/or structural integrity of perinuclear nuage particles during germ cell formation. Required for gus, Fsn and aub accumulation at the posterior pole of the embryo. Required for the localization of vas to the perinuclear region of nurse cells. May have a role in production of piwi-interacting RNA (piRNA). The polypeptide is ATP-dependent RNA helicase vasa (Drosophila melanogaster (Fruit fly)).